The chain runs to 1072 residues: DNA-directed RNA polymerase subunit beta (1072 aa).

It belongs to the RNA polymerase beta chain family. As to quaternary structure, in plastids the minimal PEP RNA polymerase catalytic core is composed of four subunits: alpha, beta, beta', and beta''. When a (nuclear-encoded) sigma factor is associated with the core the holoenzyme is formed, which can initiate transcription.

The protein localises to the plastid. It localises to the chloroplast. The catalysed reaction is RNA(n) + a ribonucleoside 5'-triphosphate = RNA(n+1) + diphosphate. Its function is as follows. DNA-dependent RNA polymerase catalyzes the transcription of DNA into RNA using the four ribonucleoside triphosphates as substrates. This chain is DNA-directed RNA polymerase subunit beta, found in Eucalyptus globulus subsp. globulus (Tasmanian blue gum).